Reading from the N-terminus, the 153-residue chain is MTDNRYDNLGQLGTSTPLPDNPDTAALERVANPCDAPYMTRFVCPEFTSLCPVTGAPDFAHLVIDYVPRDWIVESKSLKLYLGSFRNHGAFHEACTTGIGQRLVKELDPVWLRIGGYWYPRGGIPIDVFFATGEPPKGVWIPDQDVPGYRGRG.

The tract at residues 1-22 (MTDNRYDNLGQLGTSTPLPDNP) is disordered. Cys51 serves as the catalytic Thioimide intermediate. Residue Asp58 is the Proton donor of the active site. Residues 73–75 (VES) and 92–93 (HE) contribute to the substrate site.

This sequence belongs to the GTP cyclohydrolase I family. QueF type 1 subfamily.

The protein localises to the cytoplasm. The catalysed reaction is 7-aminomethyl-7-carbaguanine + 2 NADP(+) = 7-cyano-7-deazaguanine + 2 NADPH + 3 H(+). It functions in the pathway tRNA modification; tRNA-queuosine biosynthesis. Functionally, catalyzes the NADPH-dependent reduction of 7-cyano-7-deazaguanine (preQ0) to 7-aminomethyl-7-deazaguanine (preQ1). This chain is NADPH-dependent 7-cyano-7-deazaguanine reductase, found in Maricaulis maris (strain MCS10) (Caulobacter maris).